The primary structure comprises 297 residues: Acetyl-coenzyme A carboxylase carboxyl transferase subunit beta (297 aa).

The tract at residues M1–P23 is disordered. The CoA carboxyltransferase N-terminal domain occupies V26–E295. C30, C33, C49, and C52 together coordinate Zn(2+). A C4-type zinc finger spans residues C30–C52.

This sequence belongs to the AccD/PCCB family. In terms of assembly, acetyl-CoA carboxylase is a heterohexamer composed of biotin carboxyl carrier protein (AccB), biotin carboxylase (AccC) and two subunits each of ACCase subunit alpha (AccA) and ACCase subunit beta (AccD). It depends on Zn(2+) as a cofactor.

Its subcellular location is the cytoplasm. It catalyses the reaction N(6)-carboxybiotinyl-L-lysyl-[protein] + acetyl-CoA = N(6)-biotinyl-L-lysyl-[protein] + malonyl-CoA. It participates in lipid metabolism; malonyl-CoA biosynthesis; malonyl-CoA from acetyl-CoA: step 1/1. Functionally, component of the acetyl coenzyme A carboxylase (ACC) complex. Biotin carboxylase (BC) catalyzes the carboxylation of biotin on its carrier protein (BCCP) and then the CO(2) group is transferred by the transcarboxylase to acetyl-CoA to form malonyl-CoA. The protein is Acetyl-coenzyme A carboxylase carboxyl transferase subunit beta of Actinobacillus pleuropneumoniae serotype 3 (strain JL03).